Here is a 175-residue protein sequence, read N- to C-terminus: Beta-carotene hydroxylase (175 aa).

The Fatty acid hydroxylase domain maps to 11 to 136 (FVTVIGMEVI…RGKEGCVSFG (126 aa)).

It belongs to the sterol desaturase family.

It catalyses the reaction all-trans-beta-carotene + 4 reduced [2Fe-2S]-[ferredoxin] + 2 O2 + 4 H(+) = all-trans-zeaxanthin + 4 oxidized [2Fe-2S]-[ferredoxin] + 2 H2O. The protein operates within carotenoid biosynthesis; zeaxanthin biosynthesis. Its function is as follows. Catalyzes the hydroxylation reaction from beta-carotene to zeaxanthin. This chain is Beta-carotene hydroxylase (crtZ), found in Pantoea ananas (Erwinia uredovora).